The chain runs to 308 residues: Aliphatic nitrilase (308 aa).

Residues 4–270 (FRAAVVQAAP…ETILTADLDT (267 aa)) form the CN hydrolase domain. Glu-44 serves as the catalytic Proton acceptor. Lys-130 is a catalytic residue. Cys-164 serves as the catalytic Nucleophile.

It belongs to the carbon-nitrogen hydrolase superfamily. Nitrilase family.

The catalysed reaction is a nitrile + 2 H2O = a carboxylate + NH4(+). In terms of biological role, nitrilase that hydrolyzes preferentially phenylacetonitrile, but not (R,S)-mandelonitrile. Also acts on dinitriles like phenylenediacetonitriles (PDAs) 1,2-PDA, 1,3-PDA, and 1,4-PDA, and cyanophenyl acetonitriles (CPAs) 2-CPA and 4-CPA, but with lower activities. The sequence is that of Aliphatic nitrilase (nit) from Sinorhizobium fredii (strain HH103).